Here is a 243-residue protein sequence, read N- to C-terminus: Small ribosomal subunit protein eS4 (243 aa).

Residues isoleucine 43–asparagine 105 enclose the S4 RNA-binding domain.

The protein belongs to the eukaryotic ribosomal protein eS4 family.

In Pyrococcus abyssi (strain GE5 / Orsay), this protein is Small ribosomal subunit protein eS4 (rps4e).